The primary structure comprises 353 residues: MTIALGKYTKDEKDLFDIMDDWLRRDRFVFVGWSGLLLFPCAYFALGGWFTGTTFVTSWYTHGLASSYLEGCNFLTAAVSTPANSLAHSLLLLWGPEAQGDFTRWCQLGGLWTFVALHGAFALIGFMLRQFELARSVQLRPYNAIAFSGPIAVFVSVFLIYPLGQSGWFFAPSFGVAAIFRFILFFQGFHNWTLNPFHMMGVAGVLGAALLCAIHGATVENTLFEDGDGANTFRAFNPTQAEETYSMVTANRFWSQIFGVAFSNKRWLHFFMLFVPVTGLWMSALGVVGLALNLRAYDFVSQEIRAAEDPEFETFYTKNILLNEGIRAWMAAQDQPHENLIFPEEVLPRGNAL.

Residue threonine 2 is modified to N-acetylthreonine. At threonine 2 the chain carries Phosphothreonine. A helical transmembrane segment spans residues 41 to 61 (CAYFALGGWFTGTTFVTSWYT). Histidine 118 contributes to the chlorophyll a binding site. Residues 125 to 141 (GFMLRQFELARSVQLRP) traverse the membrane as a helical segment. Residues glutamine 130 and asparagine 143 each contribute to the pheophytin a site. A helical membrane pass occupies residues 153-166 (VFVSVFLIYPLGQS). Residue histidine 198 participates in chlorophyll a binding. The chain crosses the membrane as a helical span at residues 208–228 (AALLCAIHGATVENTLFEDGD). Positions 215 and 262 each coordinate a plastoquinone. Histidine 215 provides a ligand contact to Fe cation. Histidine 269 contributes to the Fe cation binding site. The chain crosses the membrane as a helical span at residues 279-295 (GLWMSALGVVGLALNLR).

The protein belongs to the reaction center PufL/M/PsbA/D family. As to quaternary structure, PSII is composed of 1 copy each of membrane proteins PsbA, PsbB, PsbC, PsbD, PsbE, PsbF, PsbH, PsbI, PsbJ, PsbK, PsbL, PsbM, PsbT, PsbX, PsbY, PsbZ, Psb30/Ycf12, at least 3 peripheral proteins of the oxygen-evolving complex and a large number of cofactors. It forms dimeric complexes. Requires The D1/D2 heterodimer binds P680, chlorophylls that are the primary electron donor of PSII, and subsequent electron acceptors. It shares a non-heme iron and each subunit binds pheophytin, quinone, additional chlorophylls, carotenoids and lipids. There is also a Cl(-1) ion associated with D1 and D2, which is required for oxygen evolution. The PSII complex binds additional chlorophylls, carotenoids and specific lipids. as cofactor.

The protein localises to the plastid. It is found in the chloroplast thylakoid membrane. The catalysed reaction is 2 a plastoquinone + 4 hnu + 2 H2O = 2 a plastoquinol + O2. In terms of biological role, photosystem II (PSII) is a light-driven water:plastoquinone oxidoreductase that uses light energy to abstract electrons from H(2)O, generating O(2) and a proton gradient subsequently used for ATP formation. It consists of a core antenna complex that captures photons, and an electron transfer chain that converts photonic excitation into a charge separation. The D1/D2 (PsbA/PsbD) reaction center heterodimer binds P680, the primary electron donor of PSII as well as several subsequent electron acceptors. D2 is needed for assembly of a stable PSII complex. This chain is Photosystem II D2 protein, found in Aethionema grandiflorum (Persian stone-cress).